A 117-amino-acid polypeptide reads, in one-letter code: Large ribosomal subunit protein bL20 (117 aa).

Belongs to the bacterial ribosomal protein bL20 family.

Binds directly to 23S ribosomal RNA and is necessary for the in vitro assembly process of the 50S ribosomal subunit. It is not involved in the protein synthesizing functions of that subunit. The polypeptide is Large ribosomal subunit protein bL20 (Pelobacter propionicus (strain DSM 2379 / NBRC 103807 / OttBd1)).